A 433-amino-acid chain; its full sequence is Enolase (433 aa).

Q167 is a (2R)-2-phosphoglycerate binding site. The active-site Proton donor is the E209. Mg(2+) is bound by residues D246, E291, and D318. K326 is modified (N6-acetyllysine). K343, R372, S373, and K394 together coordinate (2R)-2-phosphoglycerate. Catalysis depends on K343, which acts as the Proton acceptor. Residue K343 is modified to N6-(2-hydroxyisobutyryl)lysine.

It belongs to the enolase family. In terms of assembly, component of the RNA degradosome, a multiprotein complex involved in RNA processing and mRNA degradation. Mg(2+) serves as cofactor. Post-translationally, acetylated and 2-hydroxyisobutyrylated at Lys-326 and Lys-343, respectively, reducing the enolase activity. Deacetylated and de-2-hydroxyisobutyrylated by NpdA/CobB, increasing the enolase activity.

It is found in the cytoplasm. The protein localises to the secreted. It localises to the cell surface. It carries out the reaction (2R)-2-phosphoglycerate = phosphoenolpyruvate + H2O. Its pathway is carbohydrate degradation; glycolysis; pyruvate from D-glyceraldehyde 3-phosphate: step 4/5. Functionally, catalyzes the reversible conversion of 2-phosphoglycerate (2-PG) into phosphoenolpyruvate (PEP). It is essential for the degradation of carbohydrates via glycolysis. The chain is Enolase from Proteus mirabilis (strain HI4320).